We begin with the raw amino-acid sequence, 78 residues long: Acyl carrier protein (78 aa).

Residues 2 to 77 (SDIEARVKKI…NAIDYANTHQ (76 aa)) form the Carrier domain. The residue at position 37 (Ser-37) is an O-(pantetheine 4'-phosphoryl)serine.

This sequence belongs to the acyl carrier protein (ACP) family. In terms of processing, 4'-phosphopantetheine is transferred from CoA to a specific serine of apo-ACP by AcpS. This modification is essential for activity because fatty acids are bound in thioester linkage to the sulfhydryl of the prosthetic group.

Its subcellular location is the cytoplasm. Its pathway is lipid metabolism; fatty acid biosynthesis. Carrier of the growing fatty acid chain in fatty acid biosynthesis. This is Acyl carrier protein from Comamonas testosteroni (Pseudomonas testosteroni).